We begin with the raw amino-acid sequence, 1405 residues long: Rho guanine nucleotide exchange factor 18 (1405 aa).

Disordered stretches follow at residues 1-47, 92-115, and 289-330; these read MGSE…EDGF, ETHR…ALPQ, and PGKS…PGKR. Basic and acidic residues-rich tracts occupy residues 92 to 103 and 308 to 330; these read ETHRQEARRESS and RQKE…PGKR. A C2H2-type; degenerate zinc finger spans residues 347–372; sequence SSCPLCGEPLLNSASLKEHPRTTLLS. One can recognise a DH domain in the interval 485-682; sequence KRQDVLYELM…KDIISQVDAK (198 aa). The PH domain maps to 723 to 825; the sequence is QLHLEGALCW…WMAHIRRAVE (103 aa). Residues 936-1016 are disordered; the sequence is QVEEGSVSAG…PQAVEMPSTE (81 aa). Thr-952 carries the post-translational modification Phosphothreonine. Ser-961 carries the phosphoserine modification. Residues 1084-1181 adopt a coiled-coil conformation; sequence FEKQREERAG…RERLELLRRF (98 aa). Disordered stretches follow at residues 1198 to 1242, 1274 to 1309, and 1328 to 1405; these read EAQP…VERP, RQTA…WESS, and ESAS…VIFF. Ser-1336 and Ser-1338 each carry phosphoserine. Pro residues predominate over residues 1355 to 1365; sequence FPAPSPAPAAT. The span at 1375–1394 shows a compositional bias: low complexity; it reads TSLPPVSPASSLPTTPLATT. Residues 1396-1405 show a composition bias toward basic and acidic residues; the sequence is EVSKEDVIFF.

Interacts with SEPT9; interaction may inhibit GEF activity. Interacts with Gbetagamma subunits GNB1 and GNG2. Interacts with EPB41L4B. Interacts with PATJ (via C-terminus).

The protein resides in the cytoplasm. It is found in the cytoskeleton. It localises to the cell membrane. Its subcellular location is the apical cell membrane. Acts as a guanine nucleotide exchange factor (GEF) for RhoA GTPases. May play a role in actin cytoskeleton reorganization in different tissues since its activation induces formation of actin stress fibers. Also acts as a GEF for RAC1, inducing production of reactive oxygen species (ROS). Does not act as a GEF for CDC42. The G protein beta-gamma (Gbetagamma) subunits of heterotrimeric G proteins act as activators, explaining the integrated effects of LPA and other G-protein coupled receptor agonists on actin stress fiber formation, cell shape change and ROS production. Required for EPB41L4B-mediated regulation of the circumferential actomyosin belt in epithelial cells. The chain is Rho guanine nucleotide exchange factor 18 (Arhgef18) from Mus musculus (Mouse).